The primary structure comprises 227 residues: LysM and putative peptidoglycan-binding domain-containing protein 1 (227 aa).

Residues Ser23 and Ser33 each carry the phosphoserine modification. The region spanning Leu40–Ile84 is the LysM domain. The interval Asn95–Phe157 is disordered. Acidic residues predominate over residues Asp98 to Glu108. Position 99 is a phosphoserine (Ser99). Polar residues predominate over residues Gln143–Leu152. Ser166, Ser181, Ser194, and Ser212 each carry phosphoserine. The tract at residues Lys169–Leu227 is disordered. The segment covering Thr216 to Leu227 has biased composition (basic and acidic residues).

The sequence is that of LysM and putative peptidoglycan-binding domain-containing protein 1 (Lysmd1) from Rattus norvegicus (Rat).